The primary structure comprises 894 residues: Peroxisomal hydratase-dehydrogenase-epimerase (894 aa).

Short-chain dehydrogenase like regions lie at residues R6 to N230 and D311 to K523. Positions 14, 53, 99, 132, 164, 168, and 197 each coordinate NADP(+). Y164 serves as the catalytic Proton acceptor. K168 serves as the catalytic Lowers pKa of active site Tyr. Catalysis depends on Y458, which acts as the Proton acceptor. (3R)-3-hydroxydecanoyl-CoA contacts are provided by H693, G694, and K723. Residues K763–P782 form a disordered region. The MaoC-like domain maps to K776–S887. (3R)-3-hydroxydecanoyl-CoA is bound by residues D803, N805, G826, F851, and G853.

Belongs to the short-chain dehydrogenases/reductases (SDR) family. As to quaternary structure, monomer.

Its subcellular location is the peroxisome. The enzyme catalyses a (3R)-3-hydroxyacyl-CoA = a (2E)-enoyl-CoA + H2O. The catalysed reaction is a (3R)-3-hydroxyacyl-CoA + NAD(+) = a 3-oxoacyl-CoA + NADH + H(+). The protein operates within lipid metabolism; fatty acid beta-oxidation. Its function is as follows. Second trifunctional enzyme acting on the beta-oxidation pathway for fatty acids, possessing hydratase-dehydrogenase-epimerase activities. Converts trans-2-enoyl-CoA via D-3-hydroxyacyl-CoA to 3-ketoacyl-CoA. In Neurospora crassa (strain ATCC 24698 / 74-OR23-1A / CBS 708.71 / DSM 1257 / FGSC 987), this protein is Peroxisomal hydratase-dehydrogenase-epimerase (fox-2).